The sequence spans 832 residues: Serine/threonine-protein kinase Doa (832 aa).

Disordered stretches follow at residues 1 to 86 (MVAA…SKYI), 135 to 158 (LLQHQQQQHHQQQQQQHQEQQQYP), 179 to 215 (SDPFMQQQHMPAHQQQQHLPHKLQQSYSSSHVPKQAP), and 258 to 419 (SKIG…QLQQ). Polar residues predominate over residues 8–18 (VPTSSSSSAAT). The span at 20–32 (RQKDVDNKLEKCL) shows a compositional bias: basic and acidic residues. Low complexity-rich tracts occupy residues 40-53 (TSSNNNSTSNSNNN), 137-158 (QHQQQQHHQQQQQQHQEQQQYP), and 183-203 (MQQQHMPAHQQQQHLPHKLQQ). Polar residues predominate over residues 271-282 (HSASFSSAQRPT). 3 stretches are compositionally biased toward low complexity: residues 285–310 (QFHQQHQQQQHLQQQQQHPQQQQHQH), 347–365 (QMQPVKYQQQQQHPHTQFQ), and 396–419 (SSSSNKQPQQPQQQQQQQQSQLQQ). Positions 479 to 799 (YKIMATLGEG…LGEALHHPFF (321 aa)) constitute a Protein kinase domain. Residues 485-493 (LGEGTFGRV) and Lys-508 each bind ATP. The Proton acceptor role is filled by Asp-605. A disordered region spans residues 809–832 (GEVSNKQPLSSGSSSRERSHSLSR). Residues 823–832 (SRERSHSLSR) show a composition bias toward basic and acidic residues.

Belongs to the protein kinase superfamily. CMGC Ser/Thr protein kinase family. Lammer subfamily. Interacts (via N-terminus) with x16 (via Arg/Ser-rich region). Interacts with eEF1gamma (via C-terminus); the interaction is probably direct, is transient and leads to phosphorylation of eEF1gamma by Doa. Mg(2+) serves as cofactor. Autophosphorylated on serine, threonine and tyrosine residues. Ubiquitous expression in embryos. Stage 17 embryos show elevated expression in CNS and brain. Ubiquitous expression in larval imaginal disks. Increased expression posterior to the eye-antennal disk morphogenetic furrow.

It is found in the cytoplasm. It localises to the cytosol. Its subcellular location is the nucleus. It catalyses the reaction L-seryl-[protein] + ATP = O-phospho-L-seryl-[protein] + ADP + H(+). It carries out the reaction L-threonyl-[protein] + ATP = O-phospho-L-threonyl-[protein] + ADP + H(+). The enzyme catalyses L-tyrosyl-[protein] + ATP = O-phospho-L-tyrosyl-[protein] + ADP + H(+). Dual specificity kinase involved in the negative regulation of microtubule-based transport through phsophorylation of the microtuble-binding protein eEF1gamma. May function in the control of alternative splicing by phosphorylating serine/arginine-rich splicing factors, the SR proteins, including x16. Negative regulator of the copia retrotransposon element of the white (w) gene. In the eye, it is required for normal pigmentation, photoreceptor cell development and for organization of interommatidial bristles. Also essential for embryonic segmentation and differentiation of the nervous system. In terms of biological role, may be the specific isoform involved in regulation of microtubule-based transport through phosphorylation of the microtubule binding protein eEF1gamma. In Drosophila melanogaster (Fruit fly), this protein is Serine/threonine-protein kinase Doa.